We begin with the raw amino-acid sequence, 338 residues long: mRNA decay activator protein ZFP36L1 (338 aa).

Residues Met1 to Asn111 form a necessary and sufficient for the association with mRNA decay enzymes and mRNA decay activation region. Residue Ser54 is modified to Phosphoserine; by MAPKAPK2. Ser90 carries the phosphoserine; by PKB/AKT1 modification. At Ser92 the chain carries Phosphoserine; by PKB/AKT1 and MAPKAPK2. A disordered region spans residues Glu93–Ser113. 2 C3H1-type zinc fingers span residues Arg114–His142 and Lys152–Glu180. The tract at residues Leu185–Asp338 is necessary for mRNA decay activation. The residue at position 203 (Ser203) is a Phosphoserine; by PKB/AKT1 and MAPKAPK2. The disordered stretch occupies residues Ser273–Asp338. Positions Gln296–Ser318 are enriched in low complexity. A Phosphoserine modification is found at Ser318. Phosphoserine; by RPS6KA1 is present on Ser334.

In terms of assembly, associates with the cytoplasmic CCR4-NOT deadenylase and RNA exosome complexes to trigger ARE-containing mRNA deadenylation and decay processes. Interacts with CNOT1. Interacts (via N-terminus) with CNOT6. Interacts with CNOT7; this interaction is inhibited in response to phorbol 12-myristate 13-acetate (PMA) treatment in a p38 MAPK-dependent manner. Interacts with DCP1A. Interacts (via N-terminus) with DCP2. Interacts (via N-terminus) with EXOSC2. Interacts with XRN1. Interacts (via phosphorylated form) with YWHAB; this interaction occurs in a protein kinase AKT1-dependent manner. Interacts (via phosphorylated form) with YWHAZ; this interaction occurs in a p38 MAPK- and AKT-signaling pathways. Post-translationally, phosphorylated. Phosphorylated by RPS6KA1 at Ser-334 upon phorbol 12-myristate 13-acetate (PMA) treatment; this phosphorylation results in dissociation of the CCR4-NOT deadenylase complex and induces p38 MAPK-mediated stabilization of the low-density lipoprotein receptor LDLR mRNA. Phosphorylated by protein kinase AKT1 at Ser-92 and Ser-203 in response to insulin; these phosphorylations stabilize ZFP36L1, increase the association with 14-3-3 proteins and mediate ARE-containing mRNA stabilization. AKT1-mediated phosphorylation at Ser-92 does not impair ARE-containing RNA-binding. Phosphorylated at Ser-54, Ser-92 and Ser-203 by MAPKAPK2; these phosphorylations increase the association with 14-3-3 proteins and mediate ARE-containing mRNA stabilization in a protein kinase AKT1-independent manner. MAPKAPK2-mediated phosphorylations at Ser-54, Ser-92 and Ser-203 do not impair ARE-containing RNA-binding. Phosphorylations increase the association with 14-3-3 proteins and mediate ARE-containing mRNA stabilization during early adipogenesis in a p38 MAPK- and AKT-dependent manner. In terms of processing, ubiquitinated. Ubiquitination leads to proteasomal degradation, a process inhibited by phosphorylations at Ser-90, Ser-92 and Ser-203. Expressed mainly in the basal epidermal layer, weakly in the suprabasal epidermal layers. Expressed in epidermal keratinocytes (at protein level). Expressed in osteoblasts.

It is found in the nucleus. The protein localises to the cytoplasm. It localises to the cytoplasmic granule. Its subcellular location is the P-body. In terms of biological role, zinc-finger RNA-binding protein that destabilizes several cytoplasmic AU-rich element (ARE)-containing mRNA transcripts by promoting their poly(A) tail removal or deadenylation, and hence provide a mechanism for attenuating protein synthesis. Acts as a 3'-untranslated region (UTR) ARE mRNA-binding adapter protein to communicate signaling events to the mRNA decay machinery. Functions by recruiting the CCR4-NOT deadenylase complex and components of the cytoplasmic RNA decay machinery to the bound ARE-containing mRNAs, and hence promotes ARE-mediated mRNA deadenylation and decay processes. Also induces the degradation of ARE-containing mRNAs even in absence of poly(A) tail. Binds to 3'-UTR ARE of numerous mRNAs. Positively regulates early adipogenesis by promoting ARE-mediated mRNA decay of immediate early genes (IEGs). Promotes ARE-mediated mRNA decay of mineralocorticoid receptor NR3C2 mRNA in response to hypertonic stress. Negatively regulates hematopoietic/erythroid cell differentiation by promoting ARE-mediated mRNA decay of the transcription factor STAT5B mRNA. Positively regulates monocyte/macrophage cell differentiation by promoting ARE-mediated mRNA decay of the cyclin-dependent kinase CDK6 mRNA. Promotes degradation of ARE-containing pluripotency-associated mRNAs in embryonic stem cells (ESCs), such as NANOG, through a fibroblast growth factor (FGF)-induced MAPK-dependent signaling pathway, and hence attenuates ESC self-renewal and positively regulates mesendoderm differentiation. May play a role in mediating pro-apoptotic effects in malignant B-cells by promoting ARE-mediated mRNA decay of BCL2 mRNA. In association with ZFP36L2 maintains quiescence on developing B lymphocytes by promoting ARE-mediated decay of several mRNAs encoding cell cycle regulators that help B cells progress through the cell cycle, and hence ensuring accurate variable-diversity-joining (VDJ) recombination and functional immune cell formation. Together with ZFP36L2 is also necessary for thymocyte development and prevention of T-cell acute lymphoblastic leukemia (T-ALL) transformation by promoting ARE-mediated mRNA decay of the oncogenic transcription factor NOTCH1 mRNA. Participates in the delivery of target ARE-mRNAs to processing bodies (PBs). In addition to its cytosolic mRNA-decay function, plays a role in the regulation of nuclear mRNA 3'-end processing; modulates mRNA 3'-end maturation efficiency of the DLL4 mRNA through binding with an ARE embedded in a weak noncanonical polyadenylation (poly(A)) signal in endothelial cells. Also involved in the regulation of stress granule (SG) and P-body (PB) formation and fusion. Plays a role in vasculogenesis and endocardial development. Plays a role in the regulation of keratinocyte proliferation, differentiation and apoptosis. Plays a role in myoblast cell differentiation. The sequence is that of mRNA decay activator protein ZFP36L1 from Homo sapiens (Human).